Reading from the N-terminus, the 376-residue chain is Ribonucleoside-diphosphate reductase subunit beta (376 aa).

Aspartate 85, glutamate 116, and histidine 119 together coordinate Fe cation. Tyrosine 123 is a catalytic residue. 3 residues coordinate Fe cation: glutamate 205, glutamate 239, and histidine 242.

This sequence belongs to the ribonucleoside diphosphate reductase small chain family. In terms of assembly, tetramer of two alpha and two beta subunits. The cofactor is Fe cation.

It catalyses the reaction a 2'-deoxyribonucleoside 5'-diphosphate + [thioredoxin]-disulfide + H2O = a ribonucleoside 5'-diphosphate + [thioredoxin]-dithiol. Functionally, provides the precursors necessary for DNA synthesis. Catalyzes the biosynthesis of deoxyribonucleotides from the corresponding ribonucleotides. This chain is Ribonucleoside-diphosphate reductase subunit beta (nrdB), found in Buchnera aphidicola subsp. Schizaphis graminum (strain Sg).